The chain runs to 297 residues: Polyhedral envelope protein (297 aa).

This sequence belongs to the baculoviridae PE family.

It is found in the virion membrane. Its function is as follows. Major component of the polyhedra envelope. The chain is Polyhedral envelope protein from Orgyia pseudotsugata (Douglas-fir tussock moth).